Consider the following 393-residue polypeptide: Riboflavin biosynthesis protein RibBA (393 aa).

Positions 1–200 (MQFDTIELAI…IKSLVAFRKA (200 aa)) are DHBP synthase. Residues 27 to 28 (RE), Asp-32, 139 to 143 (RNGHT), and Glu-163 each bind D-ribulose 5-phosphate. Mg(2+) is bound at residue Glu-28. His-142 lines the Mg(2+) pocket. Residues 201–393 (VELNVNLKAK…TKKNKMGHLI (193 aa)) are GTP cyclohydrolase II. 249–253 (RMHSA) provides a ligand contact to GTP. Zn(2+) is bound by residues Cys-254, Cys-265, and Cys-267. GTP-binding positions include Gln-270, 291–293 (EGR), and Thr-313. Asp-325 (proton acceptor; for GTP cyclohydrolase activity) is an active-site residue. The active-site Nucleophile; for GTP cyclohydrolase activity is the Arg-327. GTP is bound by residues Ser-348 and Lys-353.

This sequence in the N-terminal section; belongs to the DHBP synthase family. The protein in the C-terminal section; belongs to the GTP cyclohydrolase II family. Requires Mg(2+) as cofactor. Mn(2+) is required as a cofactor. Zn(2+) serves as cofactor.

It catalyses the reaction D-ribulose 5-phosphate = (2S)-2-hydroxy-3-oxobutyl phosphate + formate + H(+). It carries out the reaction GTP + 4 H2O = 2,5-diamino-6-hydroxy-4-(5-phosphoribosylamino)-pyrimidine + formate + 2 phosphate + 3 H(+). Its pathway is cofactor biosynthesis; riboflavin biosynthesis; 2-hydroxy-3-oxobutyl phosphate from D-ribulose 5-phosphate: step 1/1. It participates in cofactor biosynthesis; riboflavin biosynthesis; 5-amino-6-(D-ribitylamino)uracil from GTP: step 1/4. Catalyzes the conversion of D-ribulose 5-phosphate to formate and 3,4-dihydroxy-2-butanone 4-phosphate. Functionally, catalyzes the conversion of GTP to 2,5-diamino-6-ribosylamino-4(3H)-pyrimidinone 5'-phosphate (DARP), formate and pyrophosphate. In Staphylococcus epidermidis (strain ATCC 12228 / FDA PCI 1200), this protein is Riboflavin biosynthesis protein RibBA.